The primary structure comprises 169 residues: Peptide deformylase (169 aa).

Fe cation-binding residues include Cys-92 and His-134. Residue Glu-135 is part of the active site. Residue His-138 coordinates Fe cation.

The protein belongs to the polypeptide deformylase family. The cofactor is Fe(2+).

It carries out the reaction N-terminal N-formyl-L-methionyl-[peptide] + H2O = N-terminal L-methionyl-[peptide] + formate. Its function is as follows. Removes the formyl group from the N-terminal Met of newly synthesized proteins. Requires at least a dipeptide for an efficient rate of reaction. N-terminal L-methionine is a prerequisite for activity but the enzyme has broad specificity at other positions. The protein is Peptide deformylase of Cellvibrio japonicus (strain Ueda107) (Pseudomonas fluorescens subsp. cellulosa).